The following is a 156-amino-acid chain: MTIHHETRPTLNLIRLANGEGLELPAYESQGAAGMDLRAAVDGDAPLTLPPGKRALVPTGFIFEIPEGFEGQVRPRSGLAFKHGITCLNSPGTVDSDYRGEVKVLLANLGEEAFVIERGMRIAQMVIAPVTQARVAEITAASETARGAGGFGSTGV.

Substrate-binding positions include 76 to 78, asparagine 89, 93 to 95, and lysine 103; these read RSG and TVD.

It belongs to the dUTPase family. Requires Mg(2+) as cofactor.

It carries out the reaction dUTP + H2O = dUMP + diphosphate + H(+). It functions in the pathway pyrimidine metabolism; dUMP biosynthesis; dUMP from dCTP (dUTP route): step 2/2. This enzyme is involved in nucleotide metabolism: it produces dUMP, the immediate precursor of thymidine nucleotides and it decreases the intracellular concentration of dUTP so that uracil cannot be incorporated into DNA. The polypeptide is Deoxyuridine 5'-triphosphate nucleotidohydrolase (Rhizobium etli (strain CIAT 652)).